Reading from the N-terminus, the 361-residue chain is Mitogen-activated protein kinase 14A (361 aa).

The 285-residue stretch at 25 to 309 (YQNLSPVGSG…AAEALAHPYF (285 aa)) folds into the Protein kinase domain. Residues 31–39 (VGSGAYGSV) and Lys-54 each bind ATP. Asp-169 (proton acceptor) is an active-site residue. Residue Thr-181 is modified to Phosphothreonine; by MAP2K3. Residues 181–183 (TGY) carry the TXY motif. Tyr-183 bears the Phosphotyrosine; by MAP2K3 mark.

It belongs to the protein kinase superfamily. CMGC Ser/Thr protein kinase family. MAP kinase subfamily. Requires Mg(2+) as cofactor. Post-translationally, dually phosphorylated on Thr-181 and Tyr-183, which activates the enzyme.

The protein resides in the cytoplasm. It is found in the nucleus. It carries out the reaction L-seryl-[protein] + ATP = O-phospho-L-seryl-[protein] + ADP + H(+). The enzyme catalyses L-threonyl-[protein] + ATP = O-phospho-L-threonyl-[protein] + ADP + H(+). Activated by threonine and tyrosine phosphorylation by the dual specificity kinase, MKK3. Serine/threonine kinase which acts as an essential component of the MAP kinase signal transduction pathway. Mapk14a is one of the four p38 MAPKs which play an important role in the cascades of cellular responses evoked by extracellular stimuli such as pro-inflammatory cytokines or physical stress leading to direct activation of transcription factors. Accordingly, p38 MAPKs phosphorylate a broad range of proteins and it has been estimated that they may have approximately 200 to 300 substrates each. Some of the targets are downstream kinases which are activated through phosphorylation and further phosphorylate additional targets. Required for cytokinesis on the future dorsal side of the blastodisc, suggesting a role in symmetrical and synchronous blastomere cleavage. The polypeptide is Mitogen-activated protein kinase 14A (mapk14a) (Danio rerio (Zebrafish)).